Here is a 232-residue protein sequence, read N- to C-terminus: Charged multivesicular body protein 4c (232 aa).

Disordered regions lie at residues 1–23 (MSKL…PSAQ) and 172–232 (EQEE…AWAT). Residues 1–153 (MSKLGKFFKG…EISEAFSQRV (153 aa)) are intramolecular interaction with C-terminus. A compositionally biased stretch (low complexity) spans 11–23 (SRSSRARAAPSAQ). Coiled-coil stretches lie at residues 21–50 (SAQE…IQRE) and 125–182 (LNKI…KMTS). The segment at 154–232 (QFADGFDEDE…DFKQLAAWAT (79 aa)) is intramolecular interaction with N-terminus. Serine 210 carries the phosphoserine; by AURKB modification.

Belongs to the SNF7 family. As to quaternary structure, probable core component of the endosomal sorting required for transport complex III (ESCRT-III). ESCRT-III components are thought to multimerize to form a flat lattice on the perimeter membrane of the endosome. Several assembly forms of ESCRT-III may exist that interact and act sequentially. Self-associates. Interacts with CHMP2A. Interacts with CHMP4A. Interacts with CHMP4B. Interacts with CHMP6. Interacts with VPS4A. Interacts with PDCD6IP; the interaction is direct. Post-translationally, phosphorylated at Ser-210 by AURKB during cytokinesis: together with ZFYVE19/ANCHR, phosphorylated CHMP4C retains abscission-competent VPS4 (VPS4A and/or VPS4B) at the midbody ring until abscission checkpoint signaling is terminated at late cytokinesis.

The protein resides in the cytoplasm. Its subcellular location is the cytosol. The protein localises to the late endosome membrane. It is found in the midbody. It localises to the midbody ring. Probable core component of the endosomal sorting required for transport complex III (ESCRT-III) which is involved in multivesicular bodies (MVBs) formation and sorting of endosomal cargo proteins into MVBs. MVBs contain intraluminal vesicles (ILVs) that are generated by invagination and scission from the limiting membrane of the endosome and mostly are delivered to lysosomes enabling degradation of membrane proteins, such as stimulated growth factor receptors, lysosomal enzymes and lipids. The MVB pathway appears to require the sequential function of ESCRT-O, -I,-II and -III complexes. ESCRT-III proteins mostly dissociate from the invaginating membrane before the ILV is released. The ESCRT machinery also functions in topologically equivalent membrane fission events, such as the terminal stages of cytokinesis. Key component of the cytokinesis checkpoint, a process required to delay abscission to prevent both premature resolution of intercellular chromosome bridges and accumulation of DNA damage: upon phosphorylation by AURKB, together with ZFYVE19/ANCHR, retains abscission-competent VPS4 (VPS4A and/or VPS4B) at the midbody ring until abscission checkpoint signaling is terminated at late cytokinesis. Deactivation of AURKB results in dephosphorylation of CHMP4C followed by its dissociation from ANCHR and VPS4 and subsequent abscission. ESCRT-III proteins are believed to mediate the necessary vesicle extrusion and/or membrane fission activities, possibly in conjunction with the AAA ATPase VPS4. CHMP4A/B/C are required for the exosomal release of SDCBP, CD63 and syndecan. The sequence is that of Charged multivesicular body protein 4c (Chmp4c) from Rattus norvegicus (Rat).